A 711-amino-acid chain; its full sequence is Ribosomal RNA large subunit methyltransferase K/L (711 aa).

A THUMP domain is found at 43 to 154 (TLYRTLLWSR…RENLVISLDL (112 aa)).

This sequence belongs to the methyltransferase superfamily. RlmKL family.

It is found in the cytoplasm. The enzyme catalyses guanosine(2445) in 23S rRNA + S-adenosyl-L-methionine = N(2)-methylguanosine(2445) in 23S rRNA + S-adenosyl-L-homocysteine + H(+). It carries out the reaction guanosine(2069) in 23S rRNA + S-adenosyl-L-methionine = N(2)-methylguanosine(2069) in 23S rRNA + S-adenosyl-L-homocysteine + H(+). Its function is as follows. Specifically methylates the guanine in position 2445 (m2G2445) and the guanine in position 2069 (m7G2069) of 23S rRNA. The protein is Ribosomal RNA large subunit methyltransferase K/L of Haemophilus influenzae (strain 86-028NP).